A 446-amino-acid chain; its full sequence is DNA repair protein RadA (446 aa).

The C4-type zinc finger occupies 10–27; it reads CQACGNQQSKWLGKCPDC. Position 96 to 103 (96 to 103) interacts with ATP; it reads GSPGVGKS. The short motif at 253-257 is the RadA KNRFG motif element; sequence KNRFG. The tract at residues 349-446 is lon-protease-like; it reads DVFVNISGGV…KELSQVLEWM (98 aa).

It belongs to the RecA family. RadA subfamily.

Its function is as follows. DNA-dependent ATPase involved in processing of recombination intermediates, plays a role in repairing DNA breaks. Stimulates the branch migration of RecA-mediated strand transfer reactions, allowing the 3' invading strand to extend heteroduplex DNA faster. Binds ssDNA in the presence of ADP but not other nucleotides, has ATPase activity that is stimulated by ssDNA and various branched DNA structures, but inhibited by SSB. Does not have RecA's homology-searching function. The sequence is that of DNA repair protein RadA from Campylobacter jejuni subsp. jejuni serotype O:2 (strain ATCC 700819 / NCTC 11168).